An 888-amino-acid chain; its full sequence is MLRQVLHRGLRTCFSRLGHFIASHPVFFASAPVLISILLGASFSRYQVEESVEHLLAPQHSLAKIERNLVNSLFPVNRSKHRLYSDLQTPGRYGRVIVTSFQKANMLDQHHTDLILKLHAAVTKIQVPRPGFNYTFAHICILNNDKTCIVDDIVHVLEELKNARATNRTNFAITYPITHLKDGRAVYNGHQLGGVTVHSKDRVKSAEAIQLTYYLQSINSLNDMVAERWESSFCDTVRLFQKSNSKVKMYPYTSSSLREDFQKTSRVSERYLVTSLILVVTMAILCCSMQDCVRSKPWLGLLGLVTISLATLTAAGIINLTGGKYNSTFLGVPFVMLGHGLYGTFEMLSSWRKTREDQHVKERTAAVYADSMLSFSLTTAMYLVTFGIGASPFTNIEAARIFCCNSCIAIFFNYLYVLSFYGSSLVFTGYIENNYQHSIFCRKVPKPEALQEKPAWYRFLLTARFSEDTAEGEEANTYESHLLVCFLKRYYCDWITNTYVKPFVVLFYLIYISFALMGYLQVSEGSDLSNIVATATQTIEYTTAQQKYFSNYSPVIGFYIYESIEYWNTSVQEDVLEYTKGFVRISWFESYLNYLRKLNVSTGLPKKNFTDMLRNSFLKAPQFSHFQEDIIFSKKYNDEVDVVASRMFLVAKTMETNREELYDLLETLRRLSVTSKVKFIVFNPSFVYMDRYASSLGAPLHNSCISALFLLFFSAFLVADSLINVWITLTVVSVEFGVIGFMTLWKVELDCISVLCLIYGINYTIDNCAPMLSTFVLGKDFTRTKWVKNALEVHGVAILQSYLCYIVGLIPLAAVPSNLTCTLFRCLFLIAFVTFFHCFAILPVILTFLPPSKKKRKEKKNPENREEIECVEMVDIDSTRVVDQITTV.

The chain crosses the membrane as a helical span at residues 20–40 (FIASHPVFFASAPVLISILLG). Residues asparagine 77, asparagine 133, and asparagine 167 are each glycosylated (N-linked (GlcNAc...) asparagine). The SSD domain occupies 268–427 (SERYLVTSLI…LSFYGSSLVF (160 aa)). The next 2 helical transmembrane spans lie at 273-293 (VTSLILVVTMAILCCSMQDCV) and 298-318 (WLGLLGLVTISLATLTAAGII). 2 N-linked (GlcNAc...) asparagine glycosylation sites follow: asparagine 319 and asparagine 326. A run of 4 helical transmembrane segments spans residues 328–348 (TFLGVPFVMLGHGLYGTFEML), 373–393 (LSFSLTTAMYLVTFGIGASPF), 407–427 (CIAIFFNYLYVLSFYGSSLVF), and 502–522 (PFVVLFYLIYISFALMGYLQV). Asparagine 568, asparagine 599, and asparagine 608 each carry an N-linked (GlcNAc...) asparagine glycan. Transmembrane regions (helical) follow at residues 707–727 (ALFLLFFSAFLVADSLINVWI) and 738–758 (VIGFMTLWKVELDCISVLCLI). Asparagine 762 is a glycosylation site (N-linked (GlcNAc...) asparagine). The chain crosses the membrane as a helical span at residues 795-815 (GVAILQSYLCYIVGLIPLAAV). The N-linked (GlcNAc...) asparagine glycan is linked to asparagine 818. A helical transmembrane segment spans residues 826–846 (CLFLIAFVTFFHCFAILPVIL).

This sequence belongs to the patched family. Widely expressed, including in various regions of the brain with highest expression in the gray and white cerebellum, followed by the cerebellar vermis and the pituitary gland.

The protein localises to the cell membrane. The protein resides in the cell projection. Its subcellular location is the dendritic spine. Required for the development and function of the thalamic reticular nucleus (TRN), a part of the thalamus that is critical for thalamocortical transmission, generation of sleep rhythms, sensorimotor processing and attention. Can bind cholesterol in vitro. The chain is Patched domain-containing protein 1 from Homo sapiens (Human).